A 1253-amino-acid polypeptide reads, in one-letter code: Cytoplasmic FMR1-interacting protein 1 (1253 aa).

A Phosphoserine modification is found at S583. Residues 724 to 732 are EIF4E-binding; it reads DKRLRSECK. Phosphothreonine is present on T1234.

This sequence belongs to the CYFIP family. Component of the WAVE1 complex composed of ABI2, CYFIP1 or CYFIP2, BRK1, NCKAP1 and WASF1/WAVE1. Within the complex, a heterodimer containing NCKAP1 and CYFIP1 interacts with a heterotrimer formed by WAVE1, ABI2 and BRK1. Component of the CYFIP1-EIF4E-FMR1 complex which is composed of CYFIP, EIF4E and FMR1. Interacts with FMR1 but does not bind to related proteins FXR1 or FXR2. Interaction with EIF4E stimulates FMR1 binding. Component of the WAVE2 complex composed of ABI1, CYFIP1/SRA1, NCKAP1/NAP1 (NCKAP1L/HEM1 in hematopoietic cells) and WASF2/WAVE2. Interacts with the active GTP-bound form of RAC1. Interacts through its C-terminus with the C-terminus of DPYSL2/CRMP2 which is necessary for DPYSL2-induced axon outgrowth. Interacts with NYAP1, NYAP2 and MYO16. Interacts with TMEM108 (via N-terminus); the interaction associates TMEM108 with the WAVE1 complex. In terms of tissue distribution, highly expressed in embryonic and adult developing nervous system.

The protein localises to the cytoplasm. It is found in the perinuclear region. It localises to the cell projection. Its subcellular location is the lamellipodium. The protein resides in the ruffle. The protein localises to the synapse. It is found in the synaptosome. Its function is as follows. Component of the CYFIP1-EIF4E-FMR1 complex which binds to the mRNA cap and mediates translational repression. In the CYFIP1-EIF4E-FMR1 complex this subunit is an adapter between EIF4E and FMR1. Promotes the translation repression activity of FMR1 in brain probably by mediating its association with EIF4E and mRNA. Regulates formation of membrane ruffles and lamellipodia. Plays a role in axon outgrowth. Binds to F-actin but not to RNA. Part of the WAVE complex that regulates actin filament reorganization via its interaction with the Arp2/3 complex. Actin remodeling activity is regulated by RAC1. Regulator of epithelial morphogenesis. May act as an invasion suppressor in cancers. As component of the WAVE1 complex, required for BDNF-NTRK2 endocytic trafficking and signaling from early endosomes. The chain is Cytoplasmic FMR1-interacting protein 1 from Mus musculus (Mouse).